Reading from the N-terminus, the 362-residue chain is MASHKITLLTGDGIGPEISIVAKKILAALSEKHSITFTIEEKPFGGQAIELTGKPLPEDTLNSCKASDAVLLAAIGDPKYDDLPRDLRPETGLLNLRAGLNLFANIRPIKIRQALISSSSLKSEIIKDVDLVVVRELTGGIYFGQPKGRISTEEAGERAFNTMTYSDYEIDRIAKIAFDLSETRRKKICSIDKANVLEVSQLWRERVIKAQEQYPNIELTHQYVDNAAMQLVREPAQFDVILTSNLFGDIISDEAAMLTGSIGMLPSASLGEDGPGVFEPVHGSAPDIAHKNLANPIAMILSTAMMLRTGLMEYKAATDLENAIDKVLGKGFRTIDLNRDQSNTKLGCREMGDQIIKAINGI.

Arginine 97, arginine 107, arginine 135, and aspartate 225 together coordinate substrate. The Mg(2+) site is built by aspartate 225, aspartate 249, and aspartate 253. 283–295 (GSAPDIAHKNLAN) contacts NAD(+).

It belongs to the isocitrate and isopropylmalate dehydrogenases family. LeuB type 1 subfamily. As to quaternary structure, homodimer. The cofactor is Mg(2+). It depends on Mn(2+) as a cofactor.

It localises to the cytoplasm. It catalyses the reaction (2R,3S)-3-isopropylmalate + NAD(+) = 4-methyl-2-oxopentanoate + CO2 + NADH. It functions in the pathway amino-acid biosynthesis; L-leucine biosynthesis; L-leucine from 3-methyl-2-oxobutanoate: step 3/4. Its function is as follows. Catalyzes the oxidation of 3-carboxy-2-hydroxy-4-methylpentanoate (3-isopropylmalate) to 3-carboxy-4-methyl-2-oxopentanoate. The product decarboxylates to 4-methyl-2 oxopentanoate. This chain is 3-isopropylmalate dehydrogenase, found in Prochlorococcus marinus (strain SARG / CCMP1375 / SS120).